We begin with the raw amino-acid sequence, 463 residues long: Ribulose bisphosphate carboxylase (463 aa).

Residue N116 coordinates substrate. Residue K171 is the Proton acceptor of the active site. K173 lines the substrate pocket. Mg(2+) contacts are provided by K196, D198, and E199. N6-carboxylysine is present on K196. The active-site Proton acceptor is H294. Residues R295, H328, and S375 each coordinate substrate.

It belongs to the RuBisCO large chain family. Type II subfamily. As to quaternary structure, homodimer. Mg(2+) is required as a cofactor.

It carries out the reaction 2 (2R)-3-phosphoglycerate + 2 H(+) = D-ribulose 1,5-bisphosphate + CO2 + H2O. The enzyme catalyses D-ribulose 1,5-bisphosphate + O2 = 2-phosphoglycolate + (2R)-3-phosphoglycerate + 2 H(+). RuBisCO catalyzes two reactions: the carboxylation of D-ribulose 1,5-bisphosphate, the primary event in carbon dioxide fixation, as well as the oxidative fragmentation of the pentose substrate. Both reactions occur simultaneously and in competition at the same active site. This is Ribulose bisphosphate carboxylase from Hydrogenovibrio marinus.